A 171-amino-acid polypeptide reads, in one-letter code: Phosphopantetheine adenylyltransferase (171 aa).

Substrate is bound at residue threonine 9. ATP contacts are provided by residues 9–10 (TF) and histidine 17. Substrate-binding residues include lysine 41, leucine 73, and arginine 87. ATP is bound by residues 88-90 (GLR), glutamate 98, and 123-129 (YQFISGT).

The protein belongs to the bacterial CoaD family. Homohexamer. Mg(2+) is required as a cofactor.

The protein localises to the cytoplasm. It carries out the reaction (R)-4'-phosphopantetheine + ATP + H(+) = 3'-dephospho-CoA + diphosphate. It participates in cofactor biosynthesis; coenzyme A biosynthesis; CoA from (R)-pantothenate: step 4/5. Functionally, reversibly transfers an adenylyl group from ATP to 4'-phosphopantetheine, yielding dephospho-CoA (dPCoA) and pyrophosphate. The sequence is that of Phosphopantetheine adenylyltransferase from Paraburkholderia xenovorans (strain LB400).